A 1216-amino-acid chain; its full sequence is 1-phosphatidylinositol 4,5-bisphosphate phosphodiesterase beta-1 (1216 aa).

Cysteine 17 carries the S-palmitoyl cysteine lipid modification. Serine 236 carries the phosphoserine modification. A PI-PLC X-box domain is found at 316–467 (EDMSQPLSHY…LMYKILVKNK (152 aa)). Catalysis depends on residues histidine 331 and histidine 378. Position 417 is a phosphoserine (serine 417). Positions 469–534 (KSHKSSEGSG…MDEGTAGSEA (66 aa)) are disordered. Residues 472-483 (KSSEGSGKKKLS) show a composition bias toward basic and acidic residues. Over residues 491–501 (SDSSSVFEPSS) the composition is skewed to low complexity. Acidic residues predominate over residues 507-518 (ADTESDDDDDDD). Threonine 509 is modified (phosphothreonine). A phosphoserine mark is found at serine 511 and serine 582. Residues 540 to 656 (MSNLVNYIQP…GYRLKPEFMR (117 aa)) form the PI-PLC Y-box domain. The 131-residue stretch at 656 to 786 (RRPDKHFDPF…RNERNQPLTL (131 aa)) folds into the C2 domain. Disordered stretches follow at residues 834–891 (DEEE…VKAP), 967–989 (EKSA…GSSA), 1072–1095 (MDKK…EEEK), and 1173–1216 (ISED…DTPL). The span at 846–868 (ETSSEAPSETRTTPAENGVNHTA) shows a compositional bias: polar residues. A Phosphoserine; by PKC modification is found at serine 887. The segment covering 967–979 (EKSAKKDSKKKSE) has biased composition (basic and acidic residues). Phosphoserine is present on residues serine 978 and serine 987. A compositionally biased stretch (basic and acidic residues) spans 1075-1095 (KRQEKITEAKSKDKSQMEEEK). Residues serine 1197, serine 1199, and serine 1200 each carry the phosphoserine modification. The segment covering 1205–1216 (RENPGREFDTPL) has biased composition (basic and acidic residues).

In terms of assembly, interacts with DGKQ. It depends on Ca(2+) as a cofactor. Post-translationally, palmitoylated. Palmitoylation at Cys-17 by ZDHHC21 regulates the signaling activity of PLCB1 and the function of the endothelial barrier. Palmitoylation by ZDHHC21 is stimulated by inflammation.

The protein resides in the nucleus membrane. Its subcellular location is the cytoplasm. It carries out the reaction a 1,2-diacyl-sn-glycero-3-phospho-(1D-myo-inositol-4,5-bisphosphate) + H2O = 1D-myo-inositol 1,4,5-trisphosphate + a 1,2-diacyl-sn-glycerol + H(+). The enzyme catalyses a 1,2-diacyl-sn-glycero-3-phospho-(1D-myo-inositol) + H2O = 1D-myo-inositol 1-phosphate + a 1,2-diacyl-sn-glycerol + H(+). Catalyzes the hydrolysis of 1-phosphatidylinositol 4,5-bisphosphate into diacylglycerol (DAG) and inositol 1,4,5-trisphosphate (IP3) and mediates intracellular signaling downstream of G protein-coupled receptors. Regulates the function of the endothelial barrier. The polypeptide is 1-phosphatidylinositol 4,5-bisphosphate phosphodiesterase beta-1 (Mus musculus (Mouse)).